The sequence spans 490 residues: Transmembrane protein 185-like (490 aa).

Low complexity predominate over residues 1 to 31 (MIENENTSLLSTSSSSTSSSPNNANSPSSLN). 2 disordered regions span residues 1-151 (MIEN…SKYK) and 455-490 (NMIN…ISNL). Residues 47–59 (TSGNNSPSAQITK) show a composition bias toward polar residues. 2 stretches are compositionally biased toward low complexity: residues 66 to 80 (SNNS…NSRS) and 89 to 108 (NNNN…NNIN). Over residues 109–125 (KHNSIVYNKSNNKLNSI) the composition is skewed to polar residues. Residues 133 to 145 (QGGGGGNGNGNGN) show a composition bias toward gly residues. Over residues 463–472 (SESESDDETE) the composition is skewed to acidic residues.

It belongs to the TMEM185 family.

The chain is Transmembrane protein 185-like from Dictyostelium discoideum (Social amoeba).